Here is a 659-residue protein sequence, read N- to C-terminus: Cyclic-di-AMP phosphodiesterase GdpP (659 aa).

Topologically, residues 1–8 (MPSFYEKP) are cytoplasmic. The next 2 membrane-spanning stretches (helical) occupy residues 9-29 (LFRYPIYALIALSIITILISF) and 30-50 (YFNWILGTVEVLLLAVILFFI). Topologically, residues 51-659 (KRADSLIRQE…DEYFEGGVQR (609 aa)) are cytoplasmic. The segment at 84-149 (PIGIMLFNDQ…NDRKFRVVIK (66 aa)) is PAS-like domain, required for heme-binding. One can recognise a GGDEF domain in the interval 173–301 (ERTVLAYIFL…GGDQVAIKLP (129 aa)). Residues 339-496 (NVIIMGHKFP…IEATALLAGI (158 aa)) are DHH domain. Residues H345, D349, D351, D420, H444, and D499 each contribute to the Mn(2+) site. Residues 591-646 (FAVARRDEQTVCISARSLGEVNVQIIMEALEGGGHLTNAATQLSGISVSEALERLK) are DHHA1 domain.

It belongs to the GdpP/PdeA phosphodiesterase family. Heme b is required as a cofactor. Requires Mg(2+) as cofactor. Mn(2+) serves as cofactor.

It localises to the cell membrane. It carries out the reaction 3',3'-c-di-AMP + H2O = 5'-O-phosphonoadenylyl-(3'-&gt;5')-adenosine + H(+). With respect to regulation, phosphodiesterase (PDE) inhibited by Zn(2+), Ca(2+) inhibits in the presence of Mg(2+) but not Mn(2+); c-di-AMP PDE activity is competitively inhibited by ppGpp. Heme binding (by Fe(2+) or Fe(3+) heme) inhibits PDE, activity is partially restored by KCN or NO only for Fe(2+) heme. Binding of NO to Fe(2+) heme switches from hexa- to pentacoordination. Heme binding inhibits the ATPase activity. In terms of biological role, has phosphodiesterase (PDE) activity against cyclic-di-AMP (c-di-AMP) and to a much lesser extent against cyclic-di-GMP (c-di-GMP) in the DHH/DHHA1 domains. Also has ATPase activity, probably via the GGDEF domain. Overexpression leads to increased sensitivity to methyl methanesulfonate (MMS) and H(2)O(2). Overexpression leads to extreme sensitivity to the beta-lactam antibiotic cefuroxime (CEF), probably dependent on PDE activity. May monitor cellular heme or NO levels. In B.subtilis c-di-AMP is a second messenger that mediates growth, DNA repair and cell wall homeostasis; it is toxic when present in excess. The sequence is that of Cyclic-di-AMP phosphodiesterase GdpP from Bacillus subtilis (strain 168).